The chain runs to 872 residues: Trichohyalin-like protein 1 (872 aa).

Positions C46–V81 constitute an EF-hand domain. The span at Q117–D127 shows a compositional bias: polar residues. 3 disordered regions span residues Q117–A759, L774–D813, and E830–Q872. Basic and acidic residues-rich tracts occupy residues S142–P155, L164–Q190, T218–A235, G296–L307, A324–D348, R365–E375, E399–E435, and S486–D505. The segment covering N538–E570 has biased composition (polar residues). Composition is skewed to basic and acidic residues over residues T571–Q584, R592–G608, and T664–D684. 2 stretches are compositionally biased toward polar residues: residues E699 to C708 and S718 to S729. Residues T730–E751 show a composition bias toward basic and acidic residues. 2 stretches are compositionally biased toward polar residues: residues L774–V793 and N801–S812. Basic and acidic residues predominate over residues L849–K865.

The protein belongs to the S-100 family.

The chain is Trichohyalin-like protein 1 (TCHHL1) from Bos taurus (Bovine).